We begin with the raw amino-acid sequence, 155 residues long: uncharacterized protein (155 aa).

The first 23 residues, 1-23 (MRLMRNLMNALLLGAAASSLAVA), serve as a signal peptide directing secretion. Cys86 and Cys91 form a disulfide bridge.

Belongs to the ivy family.

The protein resides in the periplasm. This is an uncharacterized protein from Pseudomonas aeruginosa (strain ATCC 15692 / DSM 22644 / CIP 104116 / JCM 14847 / LMG 12228 / 1C / PRS 101 / PAO1).